A 749-amino-acid polypeptide reads, in one-letter code: Transcription factor RFX3 (749 aa).

A DNA-binding region (RFX-type winged-helix) is located at residues 183–258 (HLQWLLDNYE…YHYYGIRVKP (76 aa)). The segment at 663–699 (VSPGNLDKDEGSEVESEMDEELDDSSEPQAKREKTEL) is disordered. Residues 674-688 (SEVESEMDEELDDSS) show a composition bias toward acidic residues.

It belongs to the RFX family. As to quaternary structure, heterodimer; heterodimerizes with RFX1 and RFX2, and RFX6.

The protein resides in the nucleus. Its function is as follows. Transcription factor required for ciliogenesis and islet cell differentiation during endocrine pancreas development. Essential for the differentiation of nodal monocilia and left-right asymmetry specification during embryogenesis. Required for the biogenesis of motile cilia by governing growth and beating efficiency of motile cells. Also required for ciliated ependymal cell differentiation. Regulates the expression of genes involved in ciliary assembly (DYNC2LI1, FOXJ1 and BBS4) and genes involved in ciliary motility (DNAH11, DNAH9 and DNAH5). Together with RFX6, participates in the differentiation of 4 of the 5 islet cell types during endocrine pancreas development, with the exception of pancreatic PP (polypeptide-producing) cells. Regulates transcription by forming a heterodimer with another RFX protein and binding to the X-box in the promoter of target genes. Represses transcription of MAP1A in non-neuronal cells but not in neuronal cells. This is Transcription factor RFX3 (RFX3) from Homo sapiens (Human).